Here is a 734-residue protein sequence, read N- to C-terminus: Photosystem I P700 chlorophyll a apoprotein A2 (734 aa).

Helical transmembrane passes span 46–69 (IFAS…FHVA), 135–158 (LYTG…LHLQ), 175–199 (LNHH…HVAI), 273–291 (MAHH…GHMY), 330–353 (LHFQ…QHMY), 369–395 (AALY…IFFI), 417–439 (AIIS…LYVH), and 517–535 (FLVH…LILV). [4Fe-4S] cluster-binding residues include C559 and C568. The next 2 membrane-spanning stretches (helical) occupy residues 575–596 (AFYL…YWHW) and 643–665 (LSVW…MFLI). Chlorophyll a contacts are provided by H654, M662, and Y670. W671 contributes to the phylloquinone binding site. The chain crosses the membrane as a helical span at residues 707–727 (LVGLAHFSVGYIFTYAAFLIA).

Belongs to the PsaA/PsaB family. In terms of assembly, the PsaA/B heterodimer binds the P700 chlorophyll special pair and subsequent electron acceptors. PSI consists of a core antenna complex that captures photons, and an electron transfer chain that converts photonic excitation into a charge separation. The eukaryotic PSI reaction center is composed of at least 11 subunits. It depends on P700 is a chlorophyll a/chlorophyll a' dimer, A0 is one or more chlorophyll a, A1 is one or both phylloquinones and FX is a shared 4Fe-4S iron-sulfur center. as a cofactor.

It localises to the plastid. It is found in the chloroplast thylakoid membrane. It catalyses the reaction reduced [plastocyanin] + hnu + oxidized [2Fe-2S]-[ferredoxin] = oxidized [plastocyanin] + reduced [2Fe-2S]-[ferredoxin]. PsaA and PsaB bind P700, the primary electron donor of photosystem I (PSI), as well as the electron acceptors A0, A1 and FX. PSI is a plastocyanin-ferredoxin oxidoreductase, converting photonic excitation into a charge separation, which transfers an electron from the donor P700 chlorophyll pair to the spectroscopically characterized acceptors A0, A1, FX, FA and FB in turn. Oxidized P700 is reduced on the lumenal side of the thylakoid membrane by plastocyanin. The polypeptide is Photosystem I P700 chlorophyll a apoprotein A2 (Cucumis sativus (Cucumber)).